Reading from the N-terminus, the 286-residue chain is 4-diphosphocytidyl-2-C-methyl-D-erythritol kinase (286 aa).

Lys-11 is an active-site residue. Position 93 to 103 (93 to 103 (PFGAGLGGGSS)) interacts with ATP. Asp-135 is an active-site residue.

It belongs to the GHMP kinase family. IspE subfamily.

The catalysed reaction is 4-CDP-2-C-methyl-D-erythritol + ATP = 4-CDP-2-C-methyl-D-erythritol 2-phosphate + ADP + H(+). Its pathway is isoprenoid biosynthesis; isopentenyl diphosphate biosynthesis via DXP pathway; isopentenyl diphosphate from 1-deoxy-D-xylulose 5-phosphate: step 3/6. Catalyzes the phosphorylation of the position 2 hydroxy group of 4-diphosphocytidyl-2C-methyl-D-erythritol. The sequence is that of 4-diphosphocytidyl-2-C-methyl-D-erythritol kinase from Chlorobium phaeobacteroides (strain BS1).